We begin with the raw amino-acid sequence, 415 residues long: YDG domain-containing protein At5g47160 (415 aa).

The tract at residues 163 to 186 (KKLSNASRLRANAHRPTQHKDERR) is disordered. A YDG domain is found at 262 to 407 (GSVPGIKVGD…NILFKFKLRR (146 aa)).

The protein localises to the nucleus. This Arabidopsis thaliana (Mouse-ear cress) protein is YDG domain-containing protein At5g47160.